Here is a 583-residue protein sequence, read N- to C-terminus: Secretogranin-2b (583 aa).

Positions 1 to 28 are cleaved as a signal peptide; sequence MMLSLPKLSAGGVVVLLATLLHTLTVQG. Disordered regions lie at residues 123 to 159 and 526 to 583; these read AGES…AGFV and VDNG…VAGM. Over residues 534-546 the composition is skewed to basic and acidic residues; the sequence is AKRDTQGKEEPEG.

This sequence belongs to the chromogranin/secretogranin protein family.

Its subcellular location is the secreted. Functionally, neuroendocrine protein of the granin family that regulates the biogenesis of secretory granules. Required for neurovascular modeling of the hindbrain. Acts in a non-cell autonomous manner and is required for migration and proliferation of central artery endothelial cells. Required for normal courting behavior and spawning. In Danio rerio (Zebrafish), this protein is Secretogranin-2b.